The primary structure comprises 551 residues: Glucose-6-phosphate isomerase (551 aa).

The active-site Proton donor is Glu356. Active-site residues include His387 and Lys515.

The protein belongs to the GPI family.

The protein resides in the cytoplasm. The enzyme catalyses alpha-D-glucose 6-phosphate = beta-D-fructose 6-phosphate. It participates in carbohydrate biosynthesis; gluconeogenesis. Its pathway is carbohydrate degradation; glycolysis; D-glyceraldehyde 3-phosphate and glycerone phosphate from D-glucose: step 2/4. Its function is as follows. Catalyzes the reversible isomerization of glucose-6-phosphate to fructose-6-phosphate. In Blochmanniella pennsylvanica (strain BPEN), this protein is Glucose-6-phosphate isomerase.